A 461-amino-acid chain; its full sequence is Cysteine--tRNA ligase (461 aa).

Cys-28 is a binding site for Zn(2+). The short motif at 30-40 is the 'HIGH' region element; that stretch reads VTIYDLCHIGH. 3 residues coordinate Zn(2+): Cys-211, His-236, and Glu-240. The 'KMSKS' region motif lies at 268-272; the sequence is KMSKS. Lys-271 provides a ligand contact to ATP.

The protein belongs to the class-I aminoacyl-tRNA synthetase family. In terms of assembly, monomer. The cofactor is Zn(2+).

The protein localises to the cytoplasm. The enzyme catalyses tRNA(Cys) + L-cysteine + ATP = L-cysteinyl-tRNA(Cys) + AMP + diphosphate. The chain is Cysteine--tRNA ligase from Aliivibrio fischeri (strain ATCC 700601 / ES114) (Vibrio fischeri).